The chain runs to 2040 residues: Apolipoprotein(a) (2040 aa).

Residues 1 to 19 (MEHKEVVLLLLLFLKSAAP) form the signal peptide. Kringle domains follow at residues 27–105 (DCYH…LTQC), 141–219 (ECYH…LTQC), 255–333 (ECYH…LTQC), 369–447 (ECYH…LTQC), 483–561 (ECYH…LTQC), 597–675 (ECYH…LTQC), 711–789 (ECYH…LTQC), 825–903 (ECYH…LTQC), 939–1017 (ECYH…LTRC), and 1053–1131 (DCYY…LTQC). Intrachain disulfides connect C28–C105, C49–C88, C77–C100, C142–C219, C163–C202, C191–C214, C256–C333, C277–C316, C305–C328, C370–C447, C391–C430, C419–C442, C484–C561, C505–C544, C533–C556, C598–C675, C619–C658, C647–C670, C712–C789, C733–C772, C761–C784, C826–C903, C847–C886, C875–C898, C940–C1017, C961–C1000, C989–C1012, C1054–C1131, C1075–C1114, and C1103–C1126. A glycan (N-linked (GlcNAc...) asparagine) is linked at N61. The N-linked (GlcNAc...) asparagine glycan is linked to N101. N215 carries N-linked (GlcNAc...) asparagine glycosylation. N329 carries N-linked (GlcNAc...) asparagine glycosylation. N-linked (GlcNAc...) asparagine glycosylation occurs at N443. N557 is a glycosylation site (N-linked (GlcNAc...) asparagine). An N-linked (GlcNAc...) asparagine glycan is attached at N671. N785 carries an N-linked (GlcNAc...) asparagine glycan. N899 is a glycosylation site (N-linked (GlcNAc...) asparagine). A glycan (N-linked (GlcNAc...) asparagine) is linked at N1013. The N-linked (GlcNAc...) asparagine glycan is linked to N1127. Positions 1147–1166 (DPSTEASSEEAPTEQSPGVQ) are disordered. 2 consecutive Kringle domains span residues 1167-1245 (DCYH…LTQC) and 1273-1351 (DCYH…LTQC). 6 disulfide bridges follow: C1168–C1245, C1189–C1228, C1217–C1240, C1274–C1351, C1295–C1334, and C1323–C1346. Residue N1241 is glycosylated (N-linked (GlcNAc...) asparagine). N-linked (GlcNAc...) asparagine glycosylation is found at N1347 and N1381. The disordered stretch occupies residues 1365 to 1388 (VPVPSTELPSEEAPTENSTGVQDC). Residues 1387 to 1465 (DCYRGDGQSY…RWEYCNLTRC (79 aa)) form the Kringle 13 domain. 3 disulfide bridges follow: C1388/C1465, C1409/C1448, and C1437/C1460. N1461 carries an N-linked (GlcNAc...) asparagine glycan. The interval 1476-1497 (PTVAPVPSTEAPSEQAPPEKSP) is disordered. 3 Kringle domains span residues 1501 to 1579 (DCYH…LTQC), 1615 to 1693 (QCYH…LTRC), and 1719 to 1799 (DCMF…IPLC). 10 disulfides stabilise this stretch: C1502–C1579, C1523–C1562, C1551–C1574, C1616–C1693, C1637–C1676, C1665–C1688, C1720–C1799, C1741–C1782, C1770–C1794, and C1846–C1862. N-linked (GlcNAc...) asparagine glycosylation is present at N1575. A glycan (N-linked (GlcNAc...) asparagine) is linked at N1689. Residues 1820 to 2038 (IVGGCVAHPH…FVTWIEGMMR (219 aa)) form the Peptidase S1 domain. Catalysis depends on charge relay system residues H1861 and D1904. 3 disulfides stabilise this stretch: C1938/C1996, C1968/C1975, and C1986/C2014. S1990 serves as the catalytic Charge relay system.

It belongs to the peptidase S1 family. Plasminogen subfamily. In terms of assembly, disulfide-linked to apo-B100. Binds to fibronectin and decorin. N- and O-glycosylated. The N-glycans are complex biantennary structures present in either a mono- or disialylated state. The O-glycans are mostly (80%) represented by the monosialylated core type I structure, NeuNAcalpha2-3Galbeta1-3GalNAc, with smaller amounts of disialylated and non-sialylated O-glycans also detected.

Apo(a) is the main constituent of lipoprotein(a) (Lp(a)). It has serine proteinase activity and is able of autoproteolysis. Inhibits tissue-type plasminogen activator 1. Lp(a) may be a ligand for megalin/Gp 330. The chain is Apolipoprotein(a) (LPA) from Homo sapiens (Human).